A 281-amino-acid polypeptide reads, in one-letter code: NH(3)-dependent NAD(+) synthetase (281 aa).

Residue 24–31 (GVSGGVDS) participates in ATP binding. Residue D30 participates in Mg(2+) binding. R145 lines the deamido-NAD(+) pocket. ATP is bound at residue T165. A Mg(2+)-binding site is contributed by E170. Positions 178 and 185 each coordinate deamido-NAD(+). Positions 194 and 216 each coordinate ATP.

This sequence belongs to the NAD synthetase family. Homodimer.

It catalyses the reaction deamido-NAD(+) + NH4(+) + ATP = AMP + diphosphate + NAD(+) + H(+). Its pathway is cofactor biosynthesis; NAD(+) biosynthesis; NAD(+) from deamido-NAD(+) (ammonia route): step 1/1. In terms of biological role, catalyzes the ATP-dependent amidation of deamido-NAD to form NAD. Uses ammonia as a nitrogen source. This Thermotoga maritima (strain ATCC 43589 / DSM 3109 / JCM 10099 / NBRC 100826 / MSB8) protein is NH(3)-dependent NAD(+) synthetase (nadE1).